The following is a 564-amino-acid chain: MFS-type transporter astH (564 aa).

N23 carries an N-linked (GlcNAc...) asparagine glycan. Residues 26-59 form a disordered region; sequence KDTLVNCSPDPENPEKGQASSPRTQISVDDNEES. The segment covering 43 to 53 has biased composition (polar residues); it reads QASSPRTQISV. 4 helical membrane passes run 69-89, 106-126, 143-163, and 197-217; these read LAMI…DTTI, DVGW…LSFG, GMFE…GLII, and GILG…GGAF. N-linked (GlcNAc...) asparagine glycosylation is present at N220. 6 helical membrane-spanning segments follow: residues 225 to 245, 266 to 286, 297 to 317, 339 to 359, 375 to 395, and 396 to 416; these read WCFY…ILFF, LLGS…LQWG, IIAL…VQWW, LFSF…PMWF, LPMV…VGAL, and GYYT…AGLL. Residue N425 is glycosylated (N-linked (GlcNAc...) asparagine). The next 2 membrane-spanning stretches (helical) occupy residues 461-481 and 537-557; these read TGTV…MSVG and FYVA…MQWI.

The protein belongs to the major facilitator superfamily. TCR/Tet family.

The protein localises to the membrane. MFS-type transporter; part of the gene cluster that mediates the biosynthesis of astellolides, drimane-type sesquiterpene esters that show antimicrobial, anti-inflammatory, and anti-tumor activities. Seems not to be involved in astellolides translocation. The polypeptide is MFS-type transporter astH (Aspergillus oryzae (strain ATCC 42149 / RIB 40) (Yellow koji mold)).